Reading from the N-terminus, the 152-residue chain is Endoribonuclease YbeY (152 aa).

Residues His113, His117, and His123 each contribute to the Zn(2+) site.

The protein belongs to the endoribonuclease YbeY family. It depends on Zn(2+) as a cofactor.

The protein resides in the cytoplasm. Its function is as follows. Single strand-specific metallo-endoribonuclease involved in late-stage 70S ribosome quality control and in maturation of the 3' terminus of the 16S rRNA. This is Endoribonuclease YbeY from Pseudoalteromonas atlantica (strain T6c / ATCC BAA-1087).